The primary structure comprises 842 residues: Probable cleavage and polyadenylation specificity factor subunit 2 (842 aa).

Over residues 414 to 425 (AEETRIRMERAR) the composition is skewed to basic and acidic residues. 2 disordered regions span residues 414 to 442 (AEET…DDIA) and 708 to 747 (METF…SIPI). Residues 432 to 441 (ESDDSDDDDI) show a composition bias toward acidic residues. Residues 731–747 (SNGQSKENDENASSIPI) show a composition bias toward polar residues.

This sequence belongs to the metallo-beta-lactamase superfamily. RNA-metabolizing metallo-beta-lactamase-like family. CPSF2/YSH1 subfamily. CPSF is a heterotetramer composed of four distinct subunits 160, 100, 70 and 30 kDa.

It localises to the nucleus. Functionally, CPSF plays a key role in pre-mRNA 3'-end formation, recognizing the AAUAAA signal sequence and interacting with poly(A)polymerase and other factors to bring about cleavage and poly(A) addition. This chain is Probable cleavage and polyadenylation specificity factor subunit 2, found in Caenorhabditis briggsae.